Reading from the N-terminus, the 306-residue chain is Glutathione transport system permease protein GsiC (306 aa).

The Cytoplasmic portion of the chain corresponds to 1–8 (MLNYVLKR). The chain crosses the membrane as a helical span at residues 9–29 (LLGLIPTLLIVAVLVFLFVHL). Residues 30–102 (LPGDPARLIA…SRFLPTLWLT (73 aa)) lie on the Periplasmic side of the membrane. Residues 95-292 (FLPTLWLTIT…LEFILINLVV (198 aa)) enclose the ABC transmembrane type-1 domain. The chain crosses the membrane as a helical span at residues 103-123 (ITSMIWAVLFGMAIGIAAAVW). The Cytoplasmic portion of the chain corresponds to 124–134 (RNRWPDRVGMT). The helical transmembrane segment at 135–155 (LAVTGISFPAFALGMLLMQIF) threads the bilayer. Over 156-168 (SVDLGWLPTVGAD) the chain is Periplasmic. Residues 169-189 (SWQHYILPSLTLGAAVASVMA) form a helical membrane-spanning segment. The Cytoplasmic segment spans residues 190 to 228 (RFTRSSFVDVLSEDYMRTARAKGVSETWVVLKHGLRNAM). A helical membrane pass occupies residues 229–249 (IPVVTMMGLQFGFLLGGSIVV). The Periplasmic segment spans residues 250–278 (EKVFNWPGLGRLLVDSVDMRDYPVIQAEV). Residues 279 to 299 (LLFSLEFILINLVVDVLYAAI) form a helical membrane-spanning segment. Residues 300–306 (NPAIRYK) are Cytoplasmic-facing.

It belongs to the binding-protein-dependent transport system permease family. The complex is composed of two ATP-binding proteins (GsiA), two transmembrane proteins (GsiC and GsiD) and a solute-binding protein (GsiB).

The protein localises to the cell inner membrane. In terms of biological role, part of the ABC transporter complex GsiABCD involved in glutathione import. Probably responsible for the translocation of the substrate across the membrane. The protein is Glutathione transport system permease protein GsiC of Salmonella choleraesuis (strain SC-B67).